We begin with the raw amino-acid sequence, 336 residues long: Fructose-1,6-bisphosphatase class 1 (336 aa).

Mg(2+)-binding residues include Glu-92, Asp-115, Leu-117, and Asp-118. Substrate is bound by residues 118 to 121 (DGSS), Asn-211, Tyr-244, 262 to 264 (YLY), and Lys-274. Residue Glu-280 coordinates Mg(2+).

The protein belongs to the FBPase class 1 family. Homotetramer. Mg(2+) serves as cofactor.

Its subcellular location is the cytoplasm. It carries out the reaction beta-D-fructose 1,6-bisphosphate + H2O = beta-D-fructose 6-phosphate + phosphate. Its pathway is carbohydrate biosynthesis; gluconeogenesis. The sequence is that of Fructose-1,6-bisphosphatase class 1 from Vibrio cholerae serotype O1 (strain ATCC 39541 / Classical Ogawa 395 / O395).